The following is a 776-amino-acid chain: Conserved oligomeric Golgi complex subunit 4 (776 aa).

2 positions are modified to phosphoserine: Ser-342 and Ser-345.

It belongs to the COG4 family. In terms of assembly, component of the conserved oligomeric Golgi complex which is composed of eight different subunits and is required for normal Golgi morphology and localization.

It is found in the golgi apparatus membrane. Its function is as follows. Required for normal Golgi function. The sequence is that of Conserved oligomeric Golgi complex subunit 4 from Drosophila melanogaster (Fruit fly).